Here is a 263-residue protein sequence, read N- to C-terminus: uncharacterized protein (263 aa).

One can recognise a GST N-terminal domain in the interval 44–131; the sequence is QVYSLGTPNG…YLADKFNHLI (88 aa). Residues 134–263 enclose the GST C-terminal domain; the sequence is DWAQRTEVLN…ALEVDYKAIK (130 aa).

The protein belongs to the GST superfamily. In terms of assembly, homodimer.

This is an uncharacterized protein from Streptococcus mutans serotype c (strain ATCC 700610 / UA159).